Reading from the N-terminus, the 286-residue chain is Undecaprenyl-diphosphatase (286 aa).

7 helical membrane-spanning segments follow: residues 50–70, 97–117, 127–147, 165–185, 200–220, 230–250, and 262–282; these read PGVSVTAVIQLGSIVAVIAYF, LGIAMTIGTLPILFAGLAIKL, LRSVPAIAGVSILMALLLALA, GLLVGLAQVLALIPGVSRSGS, AARFSFLLGIPAITIAGLVEL, GGVLPLMVGIVSAAVVSWLAI, and TWVFVIYRLLFGILLLAWWAG.

Belongs to the UppP family.

Its subcellular location is the cell inner membrane. It catalyses the reaction di-trans,octa-cis-undecaprenyl diphosphate + H2O = di-trans,octa-cis-undecaprenyl phosphate + phosphate + H(+). In terms of biological role, catalyzes the dephosphorylation of undecaprenyl diphosphate (UPP). Confers resistance to bacitracin. This Synechococcus sp. (strain WH7803) protein is Undecaprenyl-diphosphatase.